We begin with the raw amino-acid sequence, 650 residues long: SPARC-like protein 1 (650 aa).

The signal sequence occupies residues methionine 1–alanine 16. The disordered stretch occupies residues threonine 51–proline 352. Positions isoleucine 54–lysine 64 are enriched in basic and acidic residues. 3 positions are modified to phosphoserine: serine 70, serine 78, and serine 86. Over residues histidine 75–tyrosine 85 the composition is skewed to basic and acidic residues. The segment covering leucine 91 to leucine 101 has biased composition (acidic residues). Polar residues-rich tracts occupy residues glutamate 116–leucine 126 and threonine 135–asparagine 148. A glycan (N-linked (GlcNAc...) asparagine) is linked at asparagine 148. Residues serine 155 and serine 163 each carry the phosphoserine modification. Over residues glutamate 157–threonine 174 the composition is skewed to polar residues. Asparagine 168 is a glycosylation site (N-linked (GlcNAc...) asparagine). Residues isoleucine 189 to aspartate 210 show a composition bias toward acidic residues. Serine 272 carries the post-translational modification Phosphoserine. The segment covering glutamate 277–alanine 299 has biased composition (basic and acidic residues). At serine 353 the chain carries Phosphoserine. The disordered stretch occupies residues glutamate 375–serine 415. Over residues serine 382–glutamate 398 the composition is skewed to basic and acidic residues. Residue serine 406 is modified to Phosphoserine. In terms of domain architecture, Follistatin-like spans serine 418–cysteine 440. Disulfide bonds link cysteine 419–cysteine 430, cysteine 424–cysteine 440, cysteine 442–cysteine 476, cysteine 448–cysteine 469, cysteine 458–cysteine 495, cysteine 501–cysteine 612, and cysteine 620–cysteine 636. The Kazal-like domain maps to glycine 436–serine 497. N-linked (GlcNAc...) asparagine glycosylation is present at asparagine 462. Residues proline 608–aspartate 643 enclose the EF-hand domain. Positions 621, 623, 625, 627, and 632 each coordinate Ca(2+).

It belongs to the SPARC family. In terms of tissue distribution, highest expression in brain. Moderate levels in heart, adrenal gland, epididymis and lung. Low levels in kidney, eye, liver, spleen, submandibular gland and testis.

It localises to the secreted. The protein localises to the extracellular space. Its subcellular location is the extracellular matrix. This Mus musculus (Mouse) protein is SPARC-like protein 1 (Sparcl1).